The following is a 244-amino-acid chain: Robin (244 aa).

The sequence is that of Robin from Acanthamoeba polyphaga (Amoeba).